A 116-amino-acid chain; its full sequence is Ribonuclease T (116 aa).

The 82-residue stretch at 18-99 folds into the Exonuclease domain; it reads KRAILVGHNS…YDTEKTAELF (82 aa). His-86 functions as the Proton donor/acceptor in the catalytic mechanism.

This sequence belongs to the RNase T family. In terms of assembly, homodimer.

In terms of biological role, trims short 3' overhangs of a variety of RNA species, leaving a one or two nucleotide 3' overhang. Responsible for the end-turnover of tRNA: specifically removes the terminal AMP residue from uncharged tRNA (tRNA-C-C-A). Also appears to be involved in tRNA biosynthesis. The chain is Ribonuclease T from Azotobacter vinelandii.